Consider the following 1140-residue polypeptide: Eukaryotic translation initiation factor 3 subunit A (1140 aa).

Residues 319–502 (LQRMAAHVLL…HCIYFGTDLT (184 aa)) enclose the PCI domain. Composition is skewed to basic and acidic residues over residues 590 to 624 (NNAR…EERE), 826 to 903 (RMAQ…RPEG), 925 to 965 (DRAD…KDNE), 1000 to 1019 (SRDD…DFRN), 1026 to 1053 (RGGD…EQQR), and 1061 to 1087 (DAPR…RDVR). 2 disordered regions span residues 590 to 632 (NNAR…QNEI) and 826 to 1140 (RMAQ…VKRR). Over residues 1091–1101 (PKEGGGGGGGN) the composition is skewed to gly residues. Basic and acidic residues predominate over residues 1108–1130 (PRDEKPTTKQRDQPQDKENKAGD).

The protein belongs to the eIF-3 subunit A family. In terms of assembly, component of the eukaryotic translation initiation factor 3 (eIF-3) complex. The eIF-3 complex interacts with pix.

It is found in the cytoplasm. RNA-binding component of the eukaryotic translation initiation factor 3 (eIF-3) complex, which is involved in protein synthesis of a specialized repertoire of mRNAs and, together with other initiation factors, stimulates binding of mRNA and methionyl-tRNAi to the 40S ribosome. The eIF-3 complex specifically targets and initiates translation of a subset of mRNAs involved in cell proliferation. This is Eukaryotic translation initiation factor 3 subunit A from Drosophila willistoni (Fruit fly).